The primary structure comprises 142 residues: Lutropin subunit beta (142 aa).

An N-terminal signal peptide occupies residues 1 to 21 (MEMLQGLLLLWLLLNVGGVWT). Cystine bridges form between Cys30/Cys78, Cys44/Cys93, Cys47/Cys131, Cys55/Cys109, Cys59/Cys111, and Cys114/Cys121. N-linked (GlcNAc...) asparagine glycosylation occurs at Asn34.

This sequence belongs to the glycoprotein hormones subunit beta family. Heterodimer of a common alpha chain and a unique beta chain which confers biological specificity to thyrotropin, lutropin, follitropin and gonadotropin.

The protein resides in the secreted. Functionally, promotes spermatogenesis and ovulation by stimulating the testes and ovaries to synthesize steroids. This chain is Lutropin subunit beta (LHB), found in Panthera tigris altaica (Siberian tiger).